The sequence spans 284 residues: Pantothenate synthetase (284 aa).

30-37 (MGNLHEGH) is a binding site for ATP. Catalysis depends on H37, which acts as the Proton donor. (R)-pantoate is bound at residue Q61. Q61 provides a ligand contact to beta-alanine. 149–152 (GEKD) contributes to the ATP binding site. Position 155 (Q155) interacts with (R)-pantoate. Residues V178 and 186–189 (LSSR) each bind ATP.

Belongs to the pantothenate synthetase family. In terms of assembly, homodimer.

It is found in the cytoplasm. It catalyses the reaction (R)-pantoate + beta-alanine + ATP = (R)-pantothenate + AMP + diphosphate + H(+). Its pathway is cofactor biosynthesis; (R)-pantothenate biosynthesis; (R)-pantothenate from (R)-pantoate and beta-alanine: step 1/1. Functionally, catalyzes the condensation of pantoate with beta-alanine in an ATP-dependent reaction via a pantoyl-adenylate intermediate. The sequence is that of Pantothenate synthetase from Yersinia pestis bv. Antiqua (strain Antiqua).